Here is a 214-residue protein sequence, read N- to C-terminus: Protein DMP6 (214 aa).

Transmembrane regions (helical) follow at residues 52–72 (LANL…PICT), 83–103 (FMTA…SFTD), 143–163 (FIDF…VLFD), and 178–198 (VVEL…MVFA).

The protein belongs to the plant DMP1 protein family. In terms of tissue distribution, expressed constitutively in leaves, stems, flowers, siliques and roots (e.g. root hairs).

It is found in the vacuole membrane. Involved in membrane remodeling. In Arabidopsis thaliana (Mouse-ear cress), this protein is Protein DMP6.